We begin with the raw amino-acid sequence, 237 residues long: ATP-dependent dethiobiotin synthetase BioD (237 aa).

Residue 12–17 (DAGKTL) coordinates ATP. Mg(2+) is bound at residue Thr-16. The active site involves Lys-37. Residue Ser-41 participates in substrate binding. ATP is bound by residues Asp-54, 116-119 (EGAG), and 213-215 (PRL). Positions 54 and 116 each coordinate Mg(2+).

Belongs to the dethiobiotin synthetase family. Homodimer. Mg(2+) serves as cofactor.

Its subcellular location is the cytoplasm. It catalyses the reaction (7R,8S)-7,8-diammoniononanoate + CO2 + ATP = (4R,5S)-dethiobiotin + ADP + phosphate + 3 H(+). It participates in cofactor biosynthesis; biotin biosynthesis; biotin from 7,8-diaminononanoate: step 1/2. Catalyzes a mechanistically unusual reaction, the ATP-dependent insertion of CO2 between the N7 and N8 nitrogen atoms of 7,8-diaminopelargonic acid (DAPA, also called 7,8-diammoniononanoate) to form a ureido ring. The chain is ATP-dependent dethiobiotin synthetase BioD from Chromohalobacter salexigens (strain ATCC BAA-138 / DSM 3043 / CIP 106854 / NCIMB 13768 / 1H11).